The chain runs to 1257 residues: Liprin-alpha-2 (1257 aa).

The segment at 1 to 29 (MMCEVMPTINEDTPMSQRGSQSSGSDSDS) is disordered. Residues 16-26 (SQRGSQSSGSD) are compositionally biased toward low complexity. Coiled coils occupy residues 29–154 (SHFE…SLRM) and 185–235 (KALD…SSEG). Serine 236 carries the post-translational modification Phosphoserine. Threonine 237 is subject to Phosphothreonine. Serine 239 is modified (phosphoserine). Coiled coils occupy residues 264-541 (TDDT…SLIE) and 643-695 (HSDA…GLNL). The interval 439 to 463 (GQLEEKNQELQRARQREKMNEEHNK) is disordered. Phosphoserine occurs at positions 687 and 689. A compositionally biased stretch (low complexity) spans 709 to 725 (TASSLASSSPPSGHSTP). Disordered regions lie at residues 709 to 738 (TASS…EMDR) and 759 to 834 (EEDG…KSSI). The segment covering 787-802 (TLPSSYHNDARSSLSA) has biased composition (polar residues). Phosphoserine occurs at positions 817 and 820. SAM domains follow at residues 898–964 (WDGP…MVSL), 1020–1084 (NHEW…LKRL), and 1108–1177 (WSND…LLAL). The stretch at 1081–1107 (LKRLNYDRKELERRREASQHEIKDVLV) forms a coiled coil.

It belongs to the liprin family. Liprin-alpha subfamily. Forms homodimers and heterodimers with liprins-alpha and liprins-beta. Interacts with the second PTPase domain of PTPRD, PTPRF and PTPRS. Interacts with KIF1A; the interaction decreases in presence of calcium.

Its subcellular location is the cytoplasm. The protein localises to the cell surface. It localises to the cell projection. It is found in the dendritic spine. In terms of biological role, alters PTPRF cellular localization and induces PTPRF clustering. May regulate the disassembly of focal adhesions. May localize receptor-like tyrosine phosphatases type 2A at specific sites on the plasma membrane, possibly regulating their interaction with the extracellular environment and their association with substrates. In neuronal cells, is a scaffolding protein in the dendritic spines which acts as immobile postsynaptic post able to recruit KIF1A-driven dense core vesicles to dendritic spines. The sequence is that of Liprin-alpha-2 (Ppfia2) from Mus musculus (Mouse).